A 356-amino-acid polypeptide reads, in one-letter code: Dihydroorotate dehydrogenase (quinone) (356 aa).

Residues 67-71 (AGFDK) and Thr91 contribute to the FMN site. Position 71 (Lys71) interacts with substrate. A substrate-binding site is contributed by 116 to 120 (NRMGF). Positions 153 and 186 each coordinate FMN. Substrate is bound at residue Asn186. The Nucleophile role is filled by Ser189. Asn191 provides a ligand contact to substrate. The FMN site is built by Lys228 and Thr256. 257-258 (NT) is a substrate binding site. FMN contacts are provided by residues Gly282, Gly311, and 332-333 (YT).

Belongs to the dihydroorotate dehydrogenase family. Type 2 subfamily. In terms of assembly, monomer. Requires FMN as cofactor.

It is found in the cell membrane. The enzyme catalyses (S)-dihydroorotate + a quinone = orotate + a quinol. The protein operates within pyrimidine metabolism; UMP biosynthesis via de novo pathway; orotate from (S)-dihydroorotate (quinone route): step 1/1. Functionally, catalyzes the conversion of dihydroorotate to orotate with quinone as electron acceptor. This chain is Dihydroorotate dehydrogenase (quinone), found in Pseudarthrobacter chlorophenolicus (strain ATCC 700700 / DSM 12829 / CIP 107037 / JCM 12360 / KCTC 9906 / NCIMB 13794 / A6) (Arthrobacter chlorophenolicus).